The sequence spans 226 residues: Enolase-phosphatase E1 (226 aa).

This sequence belongs to the HAD-like hydrolase superfamily. MasA/MtnC family. Monomer. The cofactor is Mg(2+).

It carries out the reaction 5-methylsulfanyl-2,3-dioxopentyl phosphate + H2O = 1,2-dihydroxy-5-(methylsulfanyl)pent-1-en-3-one + phosphate. The protein operates within amino-acid biosynthesis; L-methionine biosynthesis via salvage pathway; L-methionine from S-methyl-5-thio-alpha-D-ribose 1-phosphate: step 3/6. Its pathway is amino-acid biosynthesis; L-methionine biosynthesis via salvage pathway; L-methionine from S-methyl-5-thio-alpha-D-ribose 1-phosphate: step 4/6. Functionally, bifunctional enzyme that catalyzes the enolization of 2,3-diketo-5-methylthiopentyl-1-phosphate (DK-MTP-1-P) into the intermediate 2-hydroxy-3-keto-5-methylthiopentenyl-1-phosphate (HK-MTPenyl-1-P), which is then dephosphorylated to form the acireductone 1,2-dihydroxy-3-keto-5-methylthiopentene (DHK-MTPene). The chain is Enolase-phosphatase E1 from Shewanella baltica (strain OS195).